Reading from the N-terminus, the 361-residue chain is MLYLLSDLSSSFTPLNVFRYITFRTGGALFTAGLFVFWFGPWIISLLRIRQGKGQPIREDGPQTHLLTKRGTPTMGGLMILAGAVVAILLWANPRNHYVWVTLTVTLGFGAIGFYDDYLKVTKQSHKGFSGKFRLALEAVIAMAACVTIAVYSPAALQNQLAFPVFKDALLNLGWFYPLFGAFVIVGAGNSVNMTDGLDGLAIVPVMIACGTFGFIAYLVGNSFTASYLQVNYVRDTGELAVVCGAVIGAGLGFLWFNAPPAQIFMGDTGSLALGGLLGSIAVATKHEIVLAIVGGLFVLEMMSVIIQVASFKLTGKRVFRMAPIHHHFEQKGWKEPQVVIRFWIIAVILAMAGLATLKLR.

The next 10 membrane-spanning stretches (helical) occupy residues 27–47 (GALF…ISLL), 72–92 (TPTM…LLWA), 99–119 (VWVT…DDYL), 135–155 (LALE…YSPA), 169–189 (ALLN…VGAG), 200–220 (GLAI…AYLV), 240–260 (LAVV…FNAP), 264–284 (IFMG…IAVA), 289–309 (IVLA…IIQV), and 338–358 (QVVI…LATL).

The protein belongs to the glycosyltransferase 4 family. MraY subfamily. Mg(2+) serves as cofactor.

It localises to the cell inner membrane. It catalyses the reaction UDP-N-acetyl-alpha-D-muramoyl-L-alanyl-gamma-D-glutamyl-meso-2,6-diaminopimeloyl-D-alanyl-D-alanine + di-trans,octa-cis-undecaprenyl phosphate = di-trans,octa-cis-undecaprenyl diphospho-N-acetyl-alpha-D-muramoyl-L-alanyl-D-glutamyl-meso-2,6-diaminopimeloyl-D-alanyl-D-alanine + UMP. The protein operates within cell wall biogenesis; peptidoglycan biosynthesis. Its function is as follows. Catalyzes the initial step of the lipid cycle reactions in the biosynthesis of the cell wall peptidoglycan: transfers peptidoglycan precursor phospho-MurNAc-pentapeptide from UDP-MurNAc-pentapeptide onto the lipid carrier undecaprenyl phosphate, yielding undecaprenyl-pyrophosphoryl-MurNAc-pentapeptide, known as lipid I. The sequence is that of Phospho-N-acetylmuramoyl-pentapeptide-transferase from Methylobacterium radiotolerans (strain ATCC 27329 / DSM 1819 / JCM 2831 / NBRC 15690 / NCIMB 10815 / 0-1).